The sequence spans 443 residues: MTHIQLDFSKTLEFFGEHELKQQQEIVKSIHKTIHEGTGAGSDFLGWVDLPVDYDKEEFSRIVEASKRIKENSDVLVVIGIGGSYLGARAAIEMLTSSFRNSNEYPEIVFVGNHLSSTYTKELVDYLADKDFSVNVISKSGTTTEPAVAFRLFKQLVEERYGKEEAQKRIFATTDKEKGALKQLATNEGYETFIVPDDVGGRYSVLTAVGLLPIATAGINIEAMMIGAAKAREELSSDKLEDNIAYQYATIRNILYAKGYTTEMLINYEPSMQYFNEWWKQLFGESEGKDFKGIYPSSANYTTDLHSLGQYVQEGRRFLFETVVKVNHPKYDITIEKDSDDLDGLNYLAGKTIDEVNTKAFEGTLLAHTDGGVPNMVVNIPQLDEETFGYVVYFFELACAMSGYQLGVNPFNQPGVEAYKQNMFALLGKPGFEDLKKELEERL.

Catalysis depends on glutamate 285, which acts as the Proton donor. Active-site residues include histidine 306 and lysine 420.

This sequence belongs to the GPI family.

It localises to the cytoplasm. It carries out the reaction alpha-D-glucose 6-phosphate = beta-D-fructose 6-phosphate. It functions in the pathway carbohydrate biosynthesis; gluconeogenesis. Its pathway is carbohydrate degradation; glycolysis; D-glyceraldehyde 3-phosphate and glycerone phosphate from D-glucose: step 2/4. Its function is as follows. Catalyzes the reversible isomerization of glucose-6-phosphate to fructose-6-phosphate. The protein is Glucose-6-phosphate isomerase of Staphylococcus aureus (strain Mu3 / ATCC 700698).